The sequence spans 579 residues: Leucine-rich repeat-containing protein 15 (579 aa).

An N-terminal signal peptide occupies residues 1 to 21 (MPLKHYLLLLVSCQAWAAGLA). The region spanning 22–53 (YYGCPSECTCSRASQVECTGAQIVAMPSPLPW) is the LRRNT domain. The Extracellular segment spans residues 22 to 536 (YYGCPSECTC…TWGMTDAQSG (515 aa)). LRR repeat units follow at residues 54–75 (NAMS…KFLN), 78–99 (ALIA…AFRN), 102–123 (SLRH…LFQD), 126–147 (NLET…QFSQ), 150–171 (NLKE…VFDH), 174–195 (GLTK…VFQH), 198–219 (NLQV…TFDA), 222–243 (NLQE…LFHN), 246–267 (NLQR…IFMQ), 270–291 (HLNK…VFGP), 294–315 (NLRE…AFSH), 318–339 (QLQV…AFNG), 342–363 (NLRE…VFRS), 366–387 (NLRN…IFAN), and 390–411 (GLMT…IFDH). A glycan (N-linked (GlcNAc...) asparagine) is linked at Asn-75. Asn-369 carries an N-linked (GlcNAc...) asparagine glycan. One can recognise an LRRCT domain in the interval 423–473 (NPWRCDSNILPLHDWLILNRARLGTDTLPVCSSPASVRGQSLVIINVNFPG). The interval 476–509 (VQGPETPEVSSYPDTSSYPDSTSISSTTEITRST) is disordered. Residues 485 to 506 (SSYPDTSSYPDSTSISSTTEIT) are compositionally biased toward low complexity. Residues 537-557 (LAIAAIVIGIIALACSLAACI) form a helical membrane-spanning segment. Residues 558–579 (CCCCCKKRSQAVLMQMKAPNEC) are Cytoplasmic-facing.

In terms of tissue distribution, expressed in chodrocytes (at protein level).

It is found in the cell membrane. This Mus musculus (Mouse) protein is Leucine-rich repeat-containing protein 15 (Lrrc15).